Consider the following 155-residue polypeptide: SsrA-binding protein (155 aa).

Belongs to the SmpB family.

It is found in the cytoplasm. Required for rescue of stalled ribosomes mediated by trans-translation. Binds to transfer-messenger RNA (tmRNA), required for stable association of tmRNA with ribosomes. tmRNA and SmpB together mimic tRNA shape, replacing the anticodon stem-loop with SmpB. tmRNA is encoded by the ssrA gene; the 2 termini fold to resemble tRNA(Ala) and it encodes a 'tag peptide', a short internal open reading frame. During trans-translation Ala-aminoacylated tmRNA acts like a tRNA, entering the A-site of stalled ribosomes, displacing the stalled mRNA. The ribosome then switches to translate the ORF on the tmRNA; the nascent peptide is terminated with the 'tag peptide' encoded by the tmRNA and targeted for degradation. The ribosome is freed to recommence translation, which seems to be the essential function of trans-translation. In Streptococcus equi subsp. equi (strain 4047), this protein is SsrA-binding protein.